Consider the following 518-residue polypeptide: T-box transcription factor TBX5 (518 aa).

A disordered region spans residues 1–46; the sequence is MADADEGFGLAHTPLEPDAKDLPCDSKPESALGAPSKSPSSPQAAF. Over residues 15–28 the composition is skewed to basic and acidic residues; it reads LEPDAKDLPCDSKP. The segment covering 34-45 has biased composition (low complexity); that stretch reads APSKSPSSPQAA. The segment at residues 58–238 is a DNA-binding region (T-box); sequence LHERELWLKF…NNPFAKGFRG (181 aa). Positions 250–356 are disordered; sequence MQSKEYPVVP…PSEEDSFYRS (107 aa). Over residues 262 to 301 the composition is skewed to polar residues; it reads TVRQKVASNHSPFSSESRALSTSSNLGSQYQCENGVSGPS. K339 bears the N6-acetyllysine mark.

In terms of assembly, monomer. Homodimer (via the T-box); binds DNA as homodimer. Interacts (via the T-box) with NKX2-5 (via the homeobox); this complex binds DNA. Interacts with GATA4. Interacts with KAT2A and KAT2B. In terms of processing, acetylation at Lys-339 by KAT2A and KAT2B promotes nuclear retention.

The protein localises to the nucleus. It is found in the cytoplasm. In terms of biological role, DNA-binding protein that regulates the transcription of several genes and is involved in heart development and limb pattern formation. Binds to the core DNA motif of NPPA promoter. In Homo sapiens (Human), this protein is T-box transcription factor TBX5 (TBX5).